A 692-amino-acid polypeptide reads, in one-letter code: Transforming growth factor beta activator LRRC33 (692 aa).

Positions M1–G24 are cleaved as a signal peptide. The Extracellular segment spans residues T25–L650. The LRRNT domain occupies A29–P56. LRR repeat units follow at residues H58–A79, R82–E103, H106–A127, R133–N155, S158–G179, R182–G203, E206–Q227, L228–E239, E251–G272, and K273–S294. N-linked (GlcNAc...) asparagine glycosylation is present at N74. A glycan (N-linked (GlcNAc...) asparagine) is linked at N155. N-linked (GlcNAc...) asparagine glycosylation occurs at N232. N-linked (GlcNAc...) asparagine glycans are attached at residues N292, N309, and N312. LRR repeat units follow at residues A329–K350, S353–P374, A377–T398, N403–S424, S427–D448, S463–G484, S486–S507, T512–S533, N537–S558, A559–E580, and G585–G605. A glycan (N-linked (GlcNAc...) asparagine) is linked at N408. N500 carries an N-linked (GlcNAc...) asparagine glycan. The 38-residue stretch at A606–W643 folds into the LRRCT domain. N622 is a glycosylation site (N-linked (GlcNAc...) asparagine). Residues F651 to F671 form a helical membrane-spanning segment. At L672–Y692 the chain is on the cytoplasmic side.

This sequence belongs to the LRRC32/LRRC33 family. Interacts (via LRR repeats) with TLR2, TLR3, TLR4, TLR9 and probably other Toll-like receptors. Interacts with CYBB/NOX2; the interaction is direct. Interacts with TGFB1; associates via disulfide bonds with the Latency-associated peptide chain (LAP) regulatory chain of TGFB1, leading to regulate activation of TGF-beta-1.

It is found in the cell membrane. The protein localises to the endoplasmic reticulum membrane. In terms of biological role, key regulator of transforming growth factor beta-1 (TGFB1) specifically required for microglia function in the nervous system. Required for activation of latent TGF-beta-1 in macrophages and microglia: associates specifically via disulfide bonds with the Latency-associated peptide (LAP), which is the regulatory chain of TGFB1, and regulates integrin-dependent activation of TGF-beta-1. TGF-beta-1 activation mediated by LRRC33/NRROS is highly localized: there is little spreading of TGF-beta-1 activated from one microglial cell to neighboring microglia, suggesting the existence of localized and selective activation of TGF-beta-1 by LRRC33/NRROS. Indirectly plays a role in Toll-like receptor (TLR) signaling: ability to inhibit TLR-mediated NF-kappa-B activation and cytokine production is probably a consequence of its role in TGF-beta-1 signaling. In Rattus norvegicus (Rat), this protein is Transforming growth factor beta activator LRRC33.